The sequence spans 186 residues: Ribosome-recycling factor (186 aa).

The protein belongs to the RRF family.

Its subcellular location is the cytoplasm. Its function is as follows. Responsible for the release of ribosomes from messenger RNA at the termination of protein biosynthesis. May increase the efficiency of translation by recycling ribosomes from one round of translation to another. The protein is Ribosome-recycling factor of Rickettsia peacockii (strain Rustic).